Reading from the N-terminus, the 255-residue chain is F-box only protein 44 (255 aa).

The F-box domain occupies 3–50; that stretch reads VGNINELPENILLELFTHVPARQLLLNCRLVCSLWRDLIDLVTLWKRK. Residues 71–252 form the FBA domain; sequence FYFLRSLHRN…VTNSSITIGP (182 aa).

As to quaternary structure, part of a SCF (SKP1-cullin-F-box) protein ligase complex. Interacts with SKP1 and CUL1. In terms of tissue distribution, abundantly expressed in brain and kidney. Expressed at lower levels in heart, spleen and liver.

Its function is as follows. Substrate-recognition component of the SCF (SKP1-CUL1-F-box protein)-type E3 ubiquitin ligase complex. This is F-box only protein 44 (FBXO44) from Homo sapiens (Human).